The chain runs to 265 residues: Thiazole synthase (265 aa).

The Schiff-base intermediate with DXP role is filled by K107. 1-deoxy-D-xylulose 5-phosphate contacts are provided by residues G168, 194–195 (AG), and 216–217 (NT).

Belongs to the ThiG family. In terms of assembly, homotetramer. Forms heterodimers with either ThiH or ThiS.

The protein resides in the cytoplasm. The catalysed reaction is [ThiS sulfur-carrier protein]-C-terminal-Gly-aminoethanethioate + 2-iminoacetate + 1-deoxy-D-xylulose 5-phosphate = [ThiS sulfur-carrier protein]-C-terminal Gly-Gly + 2-[(2R,5Z)-2-carboxy-4-methylthiazol-5(2H)-ylidene]ethyl phosphate + 2 H2O + H(+). The protein operates within cofactor biosynthesis; thiamine diphosphate biosynthesis. In terms of biological role, catalyzes the rearrangement of 1-deoxy-D-xylulose 5-phosphate (DXP) to produce the thiazole phosphate moiety of thiamine. Sulfur is provided by the thiocarboxylate moiety of the carrier protein ThiS. In vitro, sulfur can be provided by H(2)S. This chain is Thiazole synthase, found in Pseudomonas paraeruginosa (strain DSM 24068 / PA7) (Pseudomonas aeruginosa (strain PA7)).